Here is a 159-residue protein sequence, read N- to C-terminus: Ribosomal RNA large subunit methyltransferase H (159 aa).

S-adenosyl-L-methionine contacts are provided by residues L76, G108, and 127-132 (LSDMTF).

The protein belongs to the RNA methyltransferase RlmH family. In terms of assembly, homodimer.

The protein localises to the cytoplasm. It catalyses the reaction pseudouridine(1915) in 23S rRNA + S-adenosyl-L-methionine = N(3)-methylpseudouridine(1915) in 23S rRNA + S-adenosyl-L-homocysteine + H(+). In terms of biological role, specifically methylates the pseudouridine at position 1915 (m3Psi1915) in 23S rRNA. The protein is Ribosomal RNA large subunit methyltransferase H of Acetivibrio thermocellus (strain ATCC 27405 / DSM 1237 / JCM 9322 / NBRC 103400 / NCIMB 10682 / NRRL B-4536 / VPI 7372) (Clostridium thermocellum).